The following is a 176-amino-acid chain: Large ribosomal subunit protein uL16 (176 aa).

This sequence belongs to the universal ribosomal protein uL16 family.

This chain is Large ribosomal subunit protein uL16, found in Halobacterium salinarum (strain ATCC 29341 / DSM 671 / R1).